The chain runs to 82 residues: ATP synthase subunit c (82 aa).

2 helical membrane-spanning segments follow: residues 7–27 (AASV…PGIG) and 57–77 (FAFM…LLFA).

The protein belongs to the ATPase C chain family. In terms of assembly, F-type ATPases have 2 components, F(1) - the catalytic core - and F(0) - the membrane proton channel. F(1) has five subunits: alpha(3), beta(3), gamma(1), delta(1), epsilon(1). F(0) has four main subunits: a(1), b(1), b'(1) and c(10-14). The alpha and beta chains form an alternating ring which encloses part of the gamma chain. F(1) is attached to F(0) by a central stalk formed by the gamma and epsilon chains, while a peripheral stalk is formed by the delta, b and b' chains.

The protein resides in the cellular thylakoid membrane. Functionally, f(1)F(0) ATP synthase produces ATP from ADP in the presence of a proton or sodium gradient. F-type ATPases consist of two structural domains, F(1) containing the extramembraneous catalytic core and F(0) containing the membrane proton channel, linked together by a central stalk and a peripheral stalk. During catalysis, ATP synthesis in the catalytic domain of F(1) is coupled via a rotary mechanism of the central stalk subunits to proton translocation. Its function is as follows. Key component of the F(0) channel; it plays a direct role in translocation across the membrane. A homomeric c-ring of between 10-14 subunits forms the central stalk rotor element with the F(1) delta and epsilon subunits. The polypeptide is ATP synthase subunit c (Prochlorococcus marinus (strain NATL1A)).